A 95-amino-acid chain; its full sequence is Co-chaperonin GroES (95 aa).

It belongs to the GroES chaperonin family. As to quaternary structure, heptamer of 7 subunits arranged in a ring. Interacts with the chaperonin GroEL.

The protein localises to the cytoplasm. Together with the chaperonin GroEL, plays an essential role in assisting protein folding. The GroEL-GroES system forms a nano-cage that allows encapsulation of the non-native substrate proteins and provides a physical environment optimized to promote and accelerate protein folding. GroES binds to the apical surface of the GroEL ring, thereby capping the opening of the GroEL channel. In Stenotrophomonas maltophilia (strain K279a), this protein is Co-chaperonin GroES.